Consider the following 274-residue polypeptide: Small ribosomal subunit protein uS2 (274 aa).

This sequence belongs to the universal ribosomal protein uS2 family.

The protein is Small ribosomal subunit protein uS2 of Syntrophobacter fumaroxidans (strain DSM 10017 / MPOB).